The chain runs to 587 residues: Protein IQ-DOMAIN 31 (587 aa).

A disordered region spans residues 57 to 80 (ETNTVDRSGGMLETQNVGPEEISD). Serine 79 is subject to Phosphoserine. IQ domains lie at 112–140 (REIA…GIIR), 141–163 (LQAL…SVMG), and 164–188 (IVRL…VYRK). Residues 149–159 (LVRRQAVATLF) are calmodulin-binding. Residues 176–183 (IRKSDIGV) carry the Nuclear localization signal motif. The disordered stretch occupies residues 344 to 587 (NPVVESSIQP…AKTTPAERKR (244 aa)). Basic and acidic residues-rich tracts occupy residues 357–373 (PRKE…KTRE) and 390–413 (CDEK…EMEV). Positions 424-434 (ALDSSLVNQID) are enriched in polar residues. Composition is skewed to basic and acidic residues over residues 435 to 472 (SNEK…ENQK) and 482 to 494 (KTER…HHET). Composition is skewed to polar residues over residues 495 to 506 (SPSIPSYMQATK) and 544 to 561 (RITS…SGDK).

Belongs to the IQD family. As to quaternary structure, binds to multiple calmodulin (CaM) in the presence of Ca(2+) and CaM-like proteins.

The protein resides in the nucleus. It localises to the nucleus envelope. Its subcellular location is the cytoplasm. The protein localises to the cytoskeleton. It is found in the cell membrane. In terms of biological role, may be involved in cooperative interactions with calmodulins or calmodulin-like proteins. Recruits calmodulin proteins to microtubules, thus being a potential scaffold in cellular signaling and trafficking. May associate with nucleic acids and regulate gene expression at the transcriptional or post-transcriptional level. The polypeptide is Protein IQ-DOMAIN 31 (Arabidopsis thaliana (Mouse-ear cress)).